Consider the following 1331-residue polypeptide: METSSNSSGSSSSPPSQHQQQQQQNSQLNLSSQSCFSNNSSSAADFNNYMESKLSEENNYYKNFNSNLDRGDSFKLEKESIKDTIKDNIKEDKICNDNNNSSSSSSSSSSGNNNNNIKDGRAPSPITTQQISPNKLILNTTKAITKPTPILNTQQTPTTTATTNTSTSTTNSTPSKFKKIKNSTINPTIEFISKPSLSVMFGFSPIYFVESIFIVLLIYILSNFVLKETSVYVISIFVIYFVIYFDNRYQIINKLSKSSINDSDSSSNNNNNNNNTTTTNNDSASTKGNNNNEISSPETYQKDVKSKINFYEHVNISSTNLNNVNTTSNTPITNPSNVNQPSNITTATTATTTSTNNNNNVNNSINNNNNNNNNNNNNNNNNNNNNNNNNNNNNNNNNNNNGNNNGNNNGNNNNILSKENSTNSLLNNLILNNTSVGKTHNRSSSGSDSIQPPPLPTGGSSHNIFYSAFPTHPYTDIDQSSTYRTRTFGSSSINNRKSLPPEYYNQYLNFLAHSNNNNNNNNSNTNNNNNNQSVSAPVSQLATPVYQTPGTNSVVGNLENDNENNNDSFSDINDNNSVVGNDFEQDDQILQNNGISTTTSTIVPTNDETKQELSQLENSNKVRSTVSKFIKLSTGVEEKLDWAIAQQCTLQPPRSSHSVTVYGSSLVLIGGEGITGENLVQFIDVERNLFISPKVTGGKVGPESIYNHDYCRIGNKFYLFGGYVAGKLSNKLYVLTIMDDSTVHWSSPRISGGCIPSPRYGHTFTRYGNRFLLFGGYDGEQCLNDLYILEPETMCWSTVTNIKGGQTPSERFGHTSTILGEKLIIFGGKGINNNNNNNNNNNNNNNNNNNNNNNNNNNNNKGLVELNDTHILLLNEIDSSFQWQVASFHQVSEIPSERSFHSATRVGRNIVMVGGKKDDSNGNPIALRDCWVLSYRMQWSKVSGVQFSPPRYNFGLIKNGSKLFILGGKGNNNNINNNSSSGGNNSSSSSGNSNTIITNTTNTTNNNNNNNNNNNNNNNNNNNNNNNNNNNNNNNNNNNNNNNNLSILDDIWFVNTVTLPISSSVTMINYSDIKIDKEIGKGHFSKVLKGNWKGKDVAVKKLNSNKDKAREEMIQEFKAEVELLGSLQHPNLVTCYGYSLNPMCIVMEFLPSGNLFELIHSKPSEQQQSIKLDSTLILAIAFDIARGMQHLHTRNIIHRDLKSSNLLMDKHFNIKIADLGIARETSFTQTMTTIGTVAWTAPEILRHESYNQKADVYSYAIVLYELLTGEEPYQGIPPMNAGILVASKGLRPELPDNCDPNWKKLVVWCWSEDPNKRPSFEEITNYLTKTF.

3 stretches are compositionally biased toward low complexity: residues 1–42 (METS…NSSS), 96–116 (NDNN…NNNN), and 153–175 (TQQT…STPS). 3 disordered regions span residues 1-43 (METS…SSSA), 92-132 (DKIC…QQIS), and 150-175 (ILNT…STPS). 2 consecutive transmembrane segments (helical) span residues 201-221 (FGFS…IYIL) and 224-244 (FVLK…FVIY). Residues 259–287 (SINDSDSSSNNNNNNNNTTTTNNDSASTK) show a composition bias toward low complexity. Disordered regions lie at residues 259 to 300 (SIND…PETY), 320 to 419 (NLNN…LSKE), 435 to 464 (SVGK…SHNI), and 512 to 581 (AHSN…VVGN). Residues 288-299 (GNNNNEISSPET) show a composition bias toward polar residues. Residues 436-450 (VGKTHNRSSSGSDSI) show a composition bias toward polar residues. A compositionally biased stretch (low complexity) spans 514–531 (SNNNNNNNNSNTNNNNNN). A compositionally biased stretch (polar residues) spans 532–555 (QSVSAPVSQLATPVYQTPGTNSVV). Residues 557 to 577 (NLENDNENNNDSFSDINDNNS) are compositionally biased toward low complexity. 6 Kelch repeats span residues 665–710 (SLVL…NHDY), 716–769 (KFYL…RYGN), 770–816 (RFLL…GHTS), 822–868 (KLII…ELND), 909–959 (NIVM…LIKN), and 962–1008 (KLFI…NNNN). Residues 834-860 (NNNNNNNNNNNNNNNNNNNNNNNNNNN) show a composition bias toward low complexity. Residues 834–862 (NNNNNNNNNNNNNNNNNNNNNNNNNNNKG) form a disordered region. A disordered region spans residues 976–1042 (NNNSSSGGNN…NNNNNNNNNN (67 aa)). One can recognise a Protein kinase domain in the interval 1073-1331 (IKIDKEIGKG…EITNYLTKTF (259 aa)). Residues 1079-1087 (IGKGHFSKV) and Lys1100 contribute to the ATP site. The active-site Proton acceptor is Asp1200.

This sequence belongs to the protein kinase superfamily. TKL Ser/Thr protein kinase family.

It is found in the membrane. The catalysed reaction is L-seryl-[protein] + ATP = O-phospho-L-seryl-[protein] + ADP + H(+). It carries out the reaction L-threonyl-[protein] + ATP = O-phospho-L-threonyl-[protein] + ADP + H(+). This Dictyostelium discoideum (Social amoeba) protein is Probable serine/threonine-protein kinase DDB_G0272254.